A 493-amino-acid polypeptide reads, in one-letter code: Proline--tRNA ligase (493 aa).

It belongs to the class-II aminoacyl-tRNA synthetase family. ProS type 3 subfamily. Homodimer.

Its subcellular location is the cytoplasm. It carries out the reaction tRNA(Pro) + L-proline + ATP = L-prolyl-tRNA(Pro) + AMP + diphosphate. Catalyzes the attachment of proline to tRNA(Pro) in a two-step reaction: proline is first activated by ATP to form Pro-AMP and then transferred to the acceptor end of tRNA(Pro). The chain is Proline--tRNA ligase from Porphyromonas gingivalis (strain ATCC BAA-308 / W83).